The primary structure comprises 1819 residues: Protein REDUCED CHLOROPLAST COVERAGE 2 (1819 aa).

Basic residues predominate over residues 1–17 (MAPKAGKTKPHKSKGEK). Disordered regions lie at residues 1-23 (MAPKAGKTKPHKSKGEKKKKEEK), 128-180 (KPPV…GACE), 595-619 (QASSKSESKKTEDPKPEPAVKGLGK), and 634-664 (KANKTEQGKEAPANDTDNTSETEDQKELEKQ). Composition is skewed to basic and acidic residues over residues 135-145 (LPKDSEKKESG) and 600-612 (SESKKTEDPKPEP). Residues 329-603 (EDETWGGDGG…NQASSKSESK (275 aa)) form the Clu domain. Positions 649-680 (TDNTSETEDQKELEKQNEEIEKMWKELVTETA) form a coiled coil. TPR repeat units follow at residues 892–925 (GRTLLESSKTSLDKGKLEDAVNYGTKALAKLVAV), 934–967 (AGAYSLLAVVLYHTGDFNQATIYQQKALDINERE), 976–1009 (MKSYGDLAVFYYRLQHTELALKYVNRALYLLHLT), 1018–1051 (AATYINVAMMEEGMKNAHVALRYLHEALKCNQRL), and 1060–1093 (AASYHAIAIALSLMDAYSLSVQHEQTTLQILQAK). 6 disordered regions span residues 1152-1360 (SGIK…PMLS), 1413-1456 (KVNA…SPKE), 1468-1513 (KAFP…SESV), 1527-1573 (LKTV…ASAP), 1616-1670 (STPH…PRIM), and 1731-1809 (LVSE…DYSD). 2 stretches are compositionally biased toward basic and acidic residues: residues 1199–1224 (SSDKENKSETKSEEKKVENFDLEQSK) and 1230–1239 (KLVKPEATVH). Residue Ser1244 is modified to Phosphoserine. Over residues 1269 to 1313 (KLNTNFMNVTQQPSRSRGKSTNFTSPRTSSNELSISVAGSTSSPA) the composition is skewed to polar residues. The residue at position 1320 (Ser1320) is a Phosphoserine. The segment covering 1343 to 1354 (LASSACTEQINK) has biased composition (polar residues). Polar residues-rich tracts occupy residues 1496–1511 (CLLNKSPTANDSNGSE) and 1536–1546 (NLPNGDSSPKS). Basic and acidic residues predominate over residues 1551 to 1566 (DGEKQDACEAQKEMSK). A compositionally biased stretch (polar residues) spans 1650 to 1665 (SFPNSTESNGEANQFN). A compositionally biased stretch (basic and acidic residues) spans 1742–1759 (SEEKSGSEEESNNDKNAG). Residues 1767–1778 (QETTDTPENGHS) are compositionally biased toward polar residues. Over residues 1785 to 1800 (TTSHETCDEKNGERQG) the composition is skewed to basic and acidic residues.

As to expression, expressed in the non-epidermal tissues of the true leaves. Not detected in the vegetative shoot meristem and leaf primordia.

The protein localises to the nucleus. The protein resides in the cytoplasm. Its subcellular location is the cytosol. In terms of biological role, negatively regulates meristematic tissue proliferation by integrating developmental signals with carbon source availability. May act as the scaffold of a protein complex, which sequesters key factors that are required for the G2 to M transition in meristematic tissues. Together with REC2, REC3 and FMT/CLU, contributes to the establishment of the cellular volume devoted to the chloroplast compartment. The polypeptide is Protein REDUCED CHLOROPLAST COVERAGE 2 (Arabidopsis thaliana (Mouse-ear cress)).